We begin with the raw amino-acid sequence, 94 residues long: Large ribosomal subunit protein uL23 (94 aa).

Belongs to the universal ribosomal protein uL23 family. As to quaternary structure, part of the 50S ribosomal subunit. Contacts protein L29, and trigger factor when it is bound to the ribosome.

One of the early assembly proteins it binds 23S rRNA. One of the proteins that surrounds the polypeptide exit tunnel on the outside of the ribosome. Forms the main docking site for trigger factor binding to the ribosome. In Roseiflexus sp. (strain RS-1), this protein is Large ribosomal subunit protein uL23.